Consider the following 300-residue polypeptide: Aspartate carbamoyltransferase catalytic subunit (300 aa).

Carbamoyl phosphate contacts are provided by arginine 50 and threonine 51. L-aspartate is bound at residue lysine 78. Arginine 100, histidine 127, and glutamine 130 together coordinate carbamoyl phosphate. Arginine 160 and arginine 210 together coordinate L-aspartate. Alanine 253 and proline 254 together coordinate carbamoyl phosphate.

This sequence belongs to the aspartate/ornithine carbamoyltransferase superfamily. ATCase family. In terms of assembly, heterododecamer (2C3:3R2) of six catalytic PyrB chains organized as two trimers (C3), and six regulatory PyrI chains organized as three dimers (R2).

The catalysed reaction is carbamoyl phosphate + L-aspartate = N-carbamoyl-L-aspartate + phosphate + H(+). Its pathway is pyrimidine metabolism; UMP biosynthesis via de novo pathway; (S)-dihydroorotate from bicarbonate: step 2/3. In terms of biological role, catalyzes the condensation of carbamoyl phosphate and aspartate to form carbamoyl aspartate and inorganic phosphate, the committed step in the de novo pyrimidine nucleotide biosynthesis pathway. This Staphylococcus saprophyticus subsp. saprophyticus (strain ATCC 15305 / DSM 20229 / NCIMB 8711 / NCTC 7292 / S-41) protein is Aspartate carbamoyltransferase catalytic subunit.